A 461-amino-acid chain; its full sequence is L-seryl-tRNA(Sec) selenium transferase (461 aa).

Lys294 carries the N6-(pyridoxal phosphate)lysine modification.

It belongs to the SelA family. Requires pyridoxal 5'-phosphate as cofactor.

It is found in the cytoplasm. The catalysed reaction is L-seryl-tRNA(Sec) + selenophosphate + H(+) = L-selenocysteinyl-tRNA(Sec) + phosphate. It participates in aminoacyl-tRNA biosynthesis; selenocysteinyl-tRNA(Sec) biosynthesis; selenocysteinyl-tRNA(Sec) from L-seryl-tRNA(Sec) (bacterial route): step 1/1. Its function is as follows. Converts seryl-tRNA(Sec) to selenocysteinyl-tRNA(Sec) required for selenoprotein biosynthesis. This is L-seryl-tRNA(Sec) selenium transferase from Actinobacillus pleuropneumoniae serotype 7 (strain AP76).